A 66-amino-acid chain; its full sequence is Probable Sec-independent protein translocase protein TatE (66 aa).

A helical membrane pass occupies residues 1–21 (MEGISITKLLVIAVLIVLLFG). The segment at 46-66 (ETPAAKKSDGAEAAPRVENKE) is disordered.

The protein belongs to the TatA/E family. TatE subfamily.

It is found in the cell inner membrane. Its function is as follows. Part of the twin-arginine translocation (Tat) system that transports large folded proteins containing a characteristic twin-arginine motif in their signal peptide across membranes. TatE shares overlapping functions with TatA. This chain is Probable Sec-independent protein translocase protein TatE, found in Edwardsiella piscicida.